The chain runs to 122 residues: S-protein homolog 23 (122 aa).

A signal peptide spans 1-20 (MQNLSILLVCSFCILGHVSS). N86 carries an N-linked (GlcNAc...) asparagine glycan.

Belongs to the plant self-incompatibility (S1) protein family.

Its subcellular location is the secreted. The polypeptide is S-protein homolog 23 (Arabidopsis thaliana (Mouse-ear cress)).